A 128-amino-acid polypeptide reads, in one-letter code: Large ribosomal subunit protein eL22 (128 aa).

Belongs to the eukaryotic ribosomal protein eL22 family. Component of the large ribosomal subunit.

Its subcellular location is the cytoplasm. Functionally, component of the large ribosomal subunit. The ribosome is a large ribonucleoprotein complex responsible for the synthesis of proteins in the cell. This is Large ribosomal subunit protein eL22 (RPL22) from Gallus gallus (Chicken).